The chain runs to 622 residues: UvrABC system protein C (622 aa).

The 80-residue stretch at 13–92 (DKPGVYLMKN…IKKYRPRYNI (80 aa)) folds into the GIY-YIG domain. The UVR domain occupies 204 to 239 (KDIIRKLKEDMDTLSENMEFEKAAELRDKIFALEKI).

It belongs to the UvrC family. In terms of assembly, interacts with UvrB in an incision complex.

It is found in the cytoplasm. Its function is as follows. The UvrABC repair system catalyzes the recognition and processing of DNA lesions. UvrC both incises the 5' and 3' sides of the lesion. The N-terminal half is responsible for the 3' incision and the C-terminal half is responsible for the 5' incision. The chain is UvrABC system protein C from Clostridium kluyveri (strain ATCC 8527 / DSM 555 / NBRC 12016 / NCIMB 10680 / K1).